The following is a 1003-amino-acid chain: PHD finger protein 12 (1003 aa).

The disordered stretch occupies residues 29-59; the sequence is APPKTDEAEKRSRKPEKESRRSGRATNHDSC. Positions 32–59 are enriched in basic and acidic residues; sequence KTDEAEKRSRKPEKESRRSGRATNHDSC. The segment at 56-105 adopts a PHD-type 1 zinc-finger fold; that stretch reads HDSCDSCKEGGDLLCCDHCPAAFHLQCCNPPLSEEMLPPGEWMCHRCTVR. Residues Cys-59, Ser-61, Cys-62, His-79, and Cys-82 each contribute to the Zn(2+) site. Disordered stretches follow at residues 110 to 183 and 234 to 255; these read EQKK…HNDV and TTAL…KNVK. Phosphoserine is present on residues Ser-131 and Ser-134. The segment covering 138–161 has biased composition (basic and acidic residues); it reads LLDRPASKTELKAIAHARILERRA. Positions 165-178 are enriched in polar residues; the sequence is GTPTSNASTETPTS. An SIN3 interacting domain 1 region spans residues 202–241; sequence VQPQLRRPFELLIAAAMERNPTQFQLPNELTCTTALPGSS. Residues 271-321 form a PHD-type 2; atypical zinc finger; it reads VKVCFTCNRSCRVAPLIQCDYCPLLFHMDCLEPPLTAMPLGRWMCPNHIEH. Cys-274, Cys-277, Cys-289, Cys-292, His-297, Cys-300, Cys-315, and His-318 together coordinate Zn(2+). The segment at 328–364 is SIN3 interacting domain 2; it reads NLTLSNRCQVFDRFQDTISQHVVKVDFLNRIHKKHPP. Lys-467 participates in a covalent cross-link: Glycyl lysine isopeptide (Lys-Gly) (interchain with G-Cter in SUMO2). 2 disordered regions span residues 531–583 and 641–671; these read KAPC…GWPR and HRKT…VLTP. Phosphoserine is present on Ser-555. A phosphothreonine mark is found at Thr-557 and Thr-570. Polar residues predominate over residues 641-656; the sequence is HRKTVQSQIGPSSTES. Residue Thr-670 is modified to Phosphothreonine. The FHA domain occupies 814 to 868; the sequence is LYIGTGADMDVCLTNYGHCNYVSGKHACIFYDENTKHYELLNYSEHGTTVDNVLY. Positions 894-922 are disordered; the sequence is RRRHQKQDEEPSEEAAMMSSQAQGPQRRP. A Glycyl lysine isopeptide (Lys-Gly) (interchain with G-Cter in SUMO2) cross-link involves residue Lys-899. Residues 907-916 are compositionally biased toward low complexity; that stretch reads EAAMMSSQAQ. Residues Lys-972, Lys-986, and Lys-990 each participate in a glycyl lysine isopeptide (Lys-Gly) (interchain with G-Cter in SUMO2) cross-link.

In terms of assembly, component of SIN3 complexes. Interacts with SIN3A in a complex composed of HDAC1, SAP30 and SIN3A. Component of the SIN3B complex, which includes SIN3B, HDAC2 or HDAC1, PHF12 and MORF4L1; interacts directly with all subunits. Interacts with TLE5. In terms of tissue distribution, expressed mainly in heart, brain, lung, liver and testis.

Its subcellular location is the nucleus. Transcriptional repressor acting as key scaffolding subunit of SIN3 complexes which contributes to complex assembly by contacting each core subunit domain, stabilizes the complex and constitutes the substrate receptor by recruiting the H3 histone tail. SIN3 complexes are composed of a SIN3 scaffold subunit, one catalytic core (HDAC1 or HDAC2) and 2 chromatin targeting modules. SIN3B complex represses transcription and counteracts the histone acetyltransferase activity of EP300 through the recognition H3K27ac marks by PHF12 and the activity of the histone deacetylase HDAC2. SIN3B complex is recruited downstream of the constitutively active genes transcriptional start sites through interaction with histones and mitigates histone acetylation and RNA polymerase II progression within transcribed regions contributing to the regulation of transcription. May also repress transcription in a SIN3A-independent manner through recruitment of functional TLE5 complexes to DNA. May also play a role in ribosomal biogenesis. This is PHD finger protein 12 from Mus musculus (Mouse).